The chain runs to 152 residues: ARL14 effector protein-like (152 aa).

Residues 1 to 21 are disordered; it reads MNEQSEKNNSIQERHTDHSFP.

The protein is ARL14 effector protein-like (ARL14EPL) of Homo sapiens (Human).